Reading from the N-terminus, the 1435-residue chain is RNA-directed RNA polymerase VP1 (1435 aa).

Residues 604-880 (VLHNVLRPAY…KGVLGAPELF (277 aa)) form the RdRp catalytic domain.

It belongs to the reoviridae RNA-directed RNA polymerase family. In terms of assembly, interacts with VP4.

The enzyme catalyses RNA(n) + a ribonucleoside 5'-triphosphate = RNA(n+1) + diphosphate. Its function is as follows. RNA-directed RNA polymerase involved in transcription and genome replication. Following infection, catalyzes the synthesis of fully conservative plus strands. After core assembly, which consists in recruitment of one capped plus-strand for each genomic segments and polymerase complexes, the polymerase switches mode and catalyzes the synthesis of complementary minus-strands. This chain is RNA-directed RNA polymerase VP1, found in Callospermophilus lateralis (Golden-mantled ground squirrel).